Reading from the N-terminus, the 86-residue chain is Small ribosomal subunit protein bS16 (86 aa).

Belongs to the bacterial ribosomal protein bS16 family.

This is Small ribosomal subunit protein bS16 from Bordetella petrii (strain ATCC BAA-461 / DSM 12804 / CCUG 43448).